A 452-amino-acid polypeptide reads, in one-letter code: tRNA pseudouridine synthase Pus10 (452 aa).

The THUMP domain maps to 71 to 200; the sequence is EMLRALAPSC…DGHVEIQIQP (130 aa). Asp-269 (nucleophile) is an active-site residue. 2 residues coordinate substrate: Tyr-335 and Tyr-406.

It belongs to the pseudouridine synthase Pus10 family.

It carries out the reaction uridine(54) in tRNA = pseudouridine(54) in tRNA. The catalysed reaction is uridine(55) in tRNA = pseudouridine(55) in tRNA. Its function is as follows. Responsible for synthesis of pseudouridine from uracil-54 and uracil-55 in the psi GC loop of transfer RNAs. This chain is tRNA pseudouridine synthase Pus10, found in Methanothrix thermoacetophila (strain DSM 6194 / JCM 14653 / NBRC 101360 / PT) (Methanosaeta thermophila).